Reading from the N-terminus, the 261-residue chain is G patch domain-containing protein 11 (261 aa).

3 disordered regions span residues 1–67 (MEEE…LNEA), 88–124 (ALGKKGDGIVEPIPLNIKTGRSGIGHEEMKKRKAEEN), and 184–213 (EAWYWPKMNEQEADEEADEETEEDEDLVEE). Composition is skewed to basic and acidic residues over residues 29-64 (RVKECYEKEEKHKEANIKNRQQKLKDVEKEKRDTKL) and 111-124 (IGHEEMKKRKAEEN). Residues 31–65 (KECYEKEEKHKEANIKNRQQKLKDVEKEKRDTKLN) adopt a coiled-coil conformation. The G-patch domain occupies 70-116 (NENKGFALLQKMGYKKGQALGKKGDGIVEPIPLNIKTGRSGIGHEEM). The stretch at 190–222 (KMNEQEADEEADEETEEDEDLVEEELSTLEKLQ) forms a coiled coil. Residues 194-213 (QEADEEADEETEEDEDLVEE) show a composition bias toward acidic residues.

This sequence belongs to the GPATCH11 family.

Its subcellular location is the chromosome. It is found in the centromere. It localises to the kinetochore. The sequence is that of G patch domain-containing protein 11 (gpatch11) from Xenopus tropicalis (Western clawed frog).